The sequence spans 147 residues: uncharacterized protein (147 aa).

The HTH marR-type domain occupies 1-137 (MRDNTIGSLI…LYELMTKVHK (137 aa)). The H-T-H motif DNA-binding region spans 53–76 (QMELAEKVTVTQGGISRMLTRLEK).

This is an uncharacterized protein from Bacillus anthracis.